A 270-amino-acid chain; its full sequence is Probable feruloyl esterase C (270 aa).

The signal sequence occupies residues 1–21 (MIKSIILQAIMVLSTLTSVHG). Asparagine 23 carries N-linked (GlcNAc...) asparagine glycosylation.

The protein belongs to the faeC family.

It is found in the secreted. The enzyme catalyses feruloyl-polysaccharide + H2O = ferulate + polysaccharide.. Its function is as follows. Involved in degradation of plant cell walls. Hydrolyzes the feruloyl-arabinose ester bond in arabinoxylans, and the feruloyl-galactose ester bond in pectin. Active against paranitrophenyl-acetate, methyl ferulate and wheat arabinoxylan. This is Probable feruloyl esterase C (faeC) from Aspergillus oryzae (strain ATCC 42149 / RIB 40) (Yellow koji mold).